We begin with the raw amino-acid sequence, 183 residues long: MYVKVNPSSYSVAIYEIAKESNKIKTFHEQFSFVKKVIEKNPQLITFLKNDEIALEKRFELIDEIFGSLEVDVKNSIKVALVRNMIFVLRKIIVDFLKITNYELGIKFAKVITAYPLSDSELEKIQKKLNEKTKKIVEISTEVDEKLLSGYKIIFSNQLYERNYNNDLQKIKKTIIKGKEDEK.

This sequence belongs to the ATPase delta chain family. As to quaternary structure, F-type ATPases have 2 components, F(1) - the catalytic core - and F(0) - the membrane proton channel. F(1) has five subunits: alpha(3), beta(3), gamma(1), delta(1), epsilon(1). F(0) has three main subunits: a(1), b(2) and c(10-14). The alpha and beta chains form an alternating ring which encloses part of the gamma chain. F(1) is attached to F(0) by a central stalk formed by the gamma and epsilon chains, while a peripheral stalk is formed by the delta and b chains.

The protein localises to the cell membrane. Its function is as follows. F(1)F(0) ATP synthase produces ATP from ADP in the presence of a proton or sodium gradient. F-type ATPases consist of two structural domains, F(1) containing the extramembraneous catalytic core and F(0) containing the membrane proton channel, linked together by a central stalk and a peripheral stalk. During catalysis, ATP synthesis in the catalytic domain of F(1) is coupled via a rotary mechanism of the central stalk subunits to proton translocation. This protein is part of the stalk that links CF(0) to CF(1). It either transmits conformational changes from CF(0) to CF(1) or is implicated in proton conduction. The chain is ATP synthase subunit delta from Mycoplasmopsis synoviae (strain 53) (Mycoplasma synoviae).